The chain runs to 1269 residues: DNA-directed RNA polymerase subunit beta (1269 aa).

The protein belongs to the RNA polymerase beta chain family. As to quaternary structure, the RNAP catalytic core consists of 2 alpha, 1 beta, 1 beta' and 1 omega subunit. When a sigma factor is associated with the core the holoenzyme is formed, which can initiate transcription.

The catalysed reaction is RNA(n) + a ribonucleoside 5'-triphosphate = RNA(n+1) + diphosphate. In terms of biological role, DNA-dependent RNA polymerase catalyzes the transcription of DNA into RNA using the four ribonucleoside triphosphates as substrates. This chain is DNA-directed RNA polymerase subunit beta, found in Porphyromonas gingivalis (strain ATCC BAA-308 / W83).